Consider the following 441-residue polypeptide: 4-alpha-glucanotransferase (441 aa).

Residues aspartate 13, asparagine 15, aspartate 17, valine 19, and aspartate 21 each contribute to the Ca(2+) site. The Nucleophile role is filled by aspartate 186. The active-site Proton donor is glutamate 216.

Belongs to the glycosyl hydrolase 13 family. Monomer. Ca(2+) serves as cofactor.

Its subcellular location is the cytoplasm. It carries out the reaction Transfers a segment of a (1-&gt;4)-alpha-D-glucan to a new position in an acceptor, which may be glucose or a (1-&gt;4)-alpha-D-glucan.. In Thermotoga maritima (strain ATCC 43589 / DSM 3109 / JCM 10099 / NBRC 100826 / MSB8), this protein is 4-alpha-glucanotransferase (mgtA).